An 86-amino-acid chain; its full sequence is Conotoxin Lt15a (86 aa).

An N-terminal signal peptide occupies residues 1-23 (MEKLTILILVATVLLAIQVLVQS). Residues 24 to 49 (DGENPVKGRVKHYAAKRFSALFRGPR) constitute a propeptide that is removed on maturation.

It belongs to the conotoxin O2 superfamily. Post-translationally, contains 4 disulfide bonds. In terms of tissue distribution, expressed by the venom duct.

It is found in the secreted. The chain is Conotoxin Lt15a from Conus litteratus (Lettered cone).